Reading from the N-terminus, the 931-residue chain is Myocardin-related transcription factor A (931 aa).

Residues 1-256 are mediates interaction with SCAI and ACTB; sequence MPPLKSPAAF…KQDRGAPPMD (256 aa). Residue serine 6 is modified to Phosphoserine. Positions 6–23 are intervening spacer sequence 1; sequence SPAAFHEQRRSLERARTE. One copy of the RPEL 1 repeat lies at 24 to 49; sequence DYLKRKIRSRPERSELVRMHILEETS. The Bipartite Nuclear localization signal signature appears at 27–65; it reads KRKIRSRPERSELVRMHILEETSAEPSLQAKQLKLKRAR. Residues 50 to 67 form an intervening spacer sequence 2 region; the sequence is AEPSLQAKQLKLKRARLA. One copy of the RPEL 2 repeat lies at 68 to 93; sequence DDLNEKIAQRPGPMELVEKNILPVES. 2 disordered regions span residues 110–256 and 290–344; these read ADSS…PPMD and PAPP…GALP. Phosphoserine is present on residues serine 124, serine 139, and serine 156. Positions 151–162 are enriched in polar residues; it reads SATSASPTQVVS. Positions 180–189 are enriched in pro residues; it reads PPLPPPPLLP. Polar residues predominate over residues 191–215; it reads SLTNGTTIPTAKSTPTLIKQSQPKS. Residues 216 to 231 are compositionally biased toward basic and acidic residues; the sequence is ASEKSQRSKKAKELKP. A Phosphothreonine modification is found at threonine 305. 2 positions are modified to phosphoserine: serine 310 and serine 312. Residues 310 to 320 show a composition bias toward low complexity; it reads SLSTTNSSSSS. At threonine 313 the chain carries Phosphothreonine. Phosphoserine is present on residues serine 317, serine 320, and serine 333. Residues 347 to 381 form the SAP domain; the sequence is LDDMKVAELKQELKLRSLPVSGTKTELIERLRAYQ. Phosphoserine occurs at positions 385 and 446. Residues 444 to 476 are disordered; it reads FGSTGSTPPVSPTPSERSLLSTGDENSTPGDTF. Residue threonine 447 is modified to Phosphothreonine. The residue at position 449 (serine 449) is a Phosphoserine. Phosphothreonine is present on threonine 450. Serine 454 is modified (phosphoserine). Position 456 is a phosphothreonine (threonine 456). The residue at position 458 (serine 458) is a Phosphoserine. The span at 459–473 shows a compositional bias: polar residues; sequence ERSLLSTGDENSTPG. Residues serine 482, serine 492, serine 507, and serine 511 each carry the phosphoserine modification. The stretch at 515-563 forms a coiled coil; sequence RAELEGRDKDQMLQEKDKQIEALTRMLRQKQQLVERLKLQLEQEKRAQQ. Disordered stretches follow at residues 558–577, 674–746, and 763–816; these read EKRA…PVKQ, KNAD…SSSQ, and ADFK…RLED. The segment covering 678 to 694 has biased composition (low complexity); sequence SPGLSSGSPQQPSSQPG. Phosphoserine is present on residues serine 685, serine 691, and serine 695. Residues 732–746 are compositionally biased toward polar residues; that stretch reads MSQQPKQQENGSSSQ. Residues 763–778 show a composition bias toward basic and acidic residues; sequence ADFKEPPSLPGKEKPS. The span at 784 to 799 shows a compositional bias: low complexity; the sequence is GSPLAAQPSPSAELPQ. A phosphoserine mark is found at serine 792, serine 807, and serine 859.

In terms of assembly, interacts with SRF, forming the SRF-MRTFA nuclear complex which binds the 5'-CArG-3' consensus motif (CArG box) on DNA via SRF. Interacts (via RPEL repeats) with globular actin (G-actin), thereby regulating its subcellular location and activity of the complex formed with SRF. Either forms a trivalent (by binding three G-actin monomers) or pentavalent (by binding five G-actin monomers) complex with G-actin. Forms a nuclear ternary complex with SCAI and SRF, leading to suppress MRTFA-induced SRF transcriptional activity. Interacts with beta-actin (ACTB); interaction with ACTB prevents interaction with SCAI. Interacts with MRTFB. Post-translationally, phosphorylation at Ser-6 by Erk inhibits binding of globular actin (G-actin), unmasking the nuclear localization signal (NLS) and promoting nuclear import. Ubiquitously expressed, has been detected in lung, placenta, small intestine, liver, kidney, spleen, thymus, colon, muscle, heart and brain. Expressed in peripheral blood mononuclear cells (at protein level).

It localises to the cytoplasm. It is found in the nucleus. Transcription coactivator that associates with the serum response factor (SRF) transcription factor to control expression of genes regulating the cytoskeleton during development, morphogenesis and cell migration. The SRF-MRTFA complex activity responds to Rho GTPase-induced changes in cellular globular actin (G-actin) concentration, thereby coupling cytoskeletal gene expression to cytoskeletal dynamics. MRTFA binds G-actin via its RPEL repeats, regulating activity of the MRTFA-SRF complex. Activity is also regulated by filamentous actin (F-actin) in the nucleus. The polypeptide is Myocardin-related transcription factor A (Homo sapiens (Human)).